The primary structure comprises 202 residues: ATP-dependent Clp protease proteolytic subunit (202 aa).

The Nucleophile role is filled by Ser-101. The active site involves His-126.

It belongs to the peptidase S14 family. As to quaternary structure, component of the chloroplastic Clp protease core complex.

Its subcellular location is the plastid. The protein resides in the chloroplast stroma. It carries out the reaction Hydrolysis of proteins to small peptides in the presence of ATP and magnesium. alpha-casein is the usual test substrate. In the absence of ATP, only oligopeptides shorter than five residues are hydrolyzed (such as succinyl-Leu-Tyr-|-NHMec, and Leu-Tyr-Leu-|-Tyr-Trp, in which cleavage of the -Tyr-|-Leu- and -Tyr-|-Trp bonds also occurs).. Cleaves peptides in various proteins in a process that requires ATP hydrolysis. Has a chymotrypsin-like activity. Plays a major role in the degradation of misfolded proteins. In Platanus occidentalis (Sycamore), this protein is ATP-dependent Clp protease proteolytic subunit.